A 163-amino-acid chain; its full sequence is Jun dimerization protein 2 (163 aa).

Disordered stretches follow at residues 1–20 (MMPG…PGLG) and 59–89 (KRPQ…AARC). A Glycyl lysine isopeptide (Lys-Gly) (interchain with G-Cter in SUMO2) cross-link involves residue Lys65. Residues 72-135 (EERRKRRREK…QQLILMLNRH (64 aa)) enclose the bZIP domain. Residues 74–96 (RRKRRREKNKVAAARCRNKKKER) form a basic motif region. The tract at residues 100–128 (LQRESERLELMNAELKTQIEELKLERQQL) is leucine-zipper. Thr148 carries the post-translational modification Phosphothreonine; by MAPK8.

The protein belongs to the bZIP family. ATF subfamily. Forms a homodimer or heterodimer with JUN, JUNB, JUND, CEBPG and ATF2 thereby inhibiting transactivation by JUN, ATF2 and CEBPG. Binds multiple DNA elements such as cAMP-response element (CRE) and TPA response element (TRE) either as homodimer or heterodimer. Interacts with IRF2BP1. Phosphorylation of Thr-148 by MAPK8 in response to different stress conditions such as, UV irradiation, oxidatives stress and anisomycin treatments. Post-translationally, polyubiquitinated; probably by IRF2BP1. Ubiquitously expressed in all adult tissues tested as well in embryos.

It is found in the nucleus. Its function is as follows. Component of the AP-1 transcription factor that represses transactivation mediated by the Jun family of proteins. Involved in a variety of transcriptional responses associated with AP-1, such as UV-induced apoptosis, cell differentiation, tumorigenesis and antitumogeneris. Can also function as a repressor by recruiting histone deacetylase 3/HDAC3 to the promoter region of JUN. May control transcription via direct regulation of the modification of histones and the assembly of chromatin. The chain is Jun dimerization protein 2 (Jdp2) from Mus musculus (Mouse).